The chain runs to 304 residues: Glucose-6-phosphate isomerase (304 aa).

Catalysis depends on E146, which acts as the Proton donor. H177 is a catalytic residue.

Belongs to the GPI family.

It is found in the cytoplasm. It catalyses the reaction alpha-D-glucose 6-phosphate = beta-D-fructose 6-phosphate. It participates in carbohydrate degradation; glycolysis; D-glyceraldehyde 3-phosphate and glycerone phosphate from D-glucose: step 2/4. This chain is Glucose-6-phosphate isomerase (PGI), found in Calanus finmarchicus (Calanus tonsus).